We begin with the raw amino-acid sequence, 293 residues long: Aspartate carbamoyltransferase catalytic subunit (293 aa).

Residues Arg50 and Thr51 each contribute to the carbamoyl phosphate site. Lys78 lines the L-aspartate pocket. Carbamoyl phosphate is bound by residues Arg100, His127, and Gln130. Residues Arg160 and Arg210 each coordinate L-aspartate. Positions 253 and 254 each coordinate carbamoyl phosphate.

Belongs to the aspartate/ornithine carbamoyltransferase superfamily. ATCase family. In terms of assembly, heterododecamer (2C3:3R2) of six catalytic PyrB chains organized as two trimers (C3), and six regulatory PyrI chains organized as three dimers (R2).

The catalysed reaction is carbamoyl phosphate + L-aspartate = N-carbamoyl-L-aspartate + phosphate + H(+). The protein operates within pyrimidine metabolism; UMP biosynthesis via de novo pathway; (S)-dihydroorotate from bicarbonate: step 2/3. In terms of biological role, catalyzes the condensation of carbamoyl phosphate and aspartate to form carbamoyl aspartate and inorganic phosphate, the committed step in the de novo pyrimidine nucleotide biosynthesis pathway. The polypeptide is Aspartate carbamoyltransferase catalytic subunit (Staphylococcus aureus (strain USA300)).